Here is a 234-residue protein sequence, read N- to C-terminus: Small ribosomal subunit protein uS5 (234 aa).

The span at 1–10 (MEDIKTTTPE) shows a compositional bias: polar residues. The tract at residues 1–69 (MEDIKTTTPE…KDGSGNKPNK (69 aa)) is disordered. A compositionally biased stretch (basic and acidic residues) spans 11 to 31 (VKNEENKTSEVKEGKALEKNN). Positions 78–141 (LEEKIVGVKK…KSAKNNMYKV (64 aa)) constitute an S5 DRBM domain.

It belongs to the universal ribosomal protein uS5 family. As to quaternary structure, part of the 30S ribosomal subunit. Contacts proteins S4 and S8.

Its function is as follows. With S4 and S12 plays an important role in translational accuracy. In terms of biological role, located at the back of the 30S subunit body where it stabilizes the conformation of the head with respect to the body. This chain is Small ribosomal subunit protein uS5, found in Malacoplasma penetrans (strain HF-2) (Mycoplasma penetrans).